The following is a 425-amino-acid chain: Adenosine 3'-phospho 5'-phosphosulfate transporter 1 (425 aa).

Transmembrane regions (helical) follow at residues 27-47 (FLIL…IYYV), 102-122 (VIIL…AMGV), 147-167 (TQFL…MILA), 232-252 (YSWF…LFLL), 263-283 (ITYT…FDAF), 303-323 (MMFG…IEQG), 342-360 (VFLL…YSTI), 365-387 (PIVF…TIMY), and 391-411 (LTFL…VDIH).

This sequence belongs to the nucleotide-sugar transporter family. SLC35B subfamily.

It localises to the golgi apparatus membrane. Functionally, mediates the transport of adenosine 3'-phospho 5'-phosphosulfate (PAPS), from cytosol into Golgi. PAPS is a universal sulfuryl donor for sulfation events that take place in the Golgi. The polypeptide is Adenosine 3'-phospho 5'-phosphosulfate transporter 1 (pst-1) (Caenorhabditis elegans).